The following is a 193-amino-acid chain: MRNPVSMIVGLGNPGTEYANTRHNAGQDFVENLARALGQPLVNTPKHFGFTTRISLAGKDVRLLVPTTFMNRSGQAVASLANFFKIAPDNILVVHDELDLPPGTAKLKIGGGHGGHNGLRDIIAALGNNKEFGRLRIGIGHPGNAKQVASYVLKKAPADEYRLIEDAQTAAERTLTDLVAGDWEKAMRELHTA.

A tRNA-binding site is contributed by Tyr-18. His-23 serves as the catalytic Proton acceptor. Residues Phe-69, Asn-71, and Asn-117 each coordinate tRNA.

Belongs to the PTH family. Monomer.

The protein localises to the cytoplasm. It carries out the reaction an N-acyl-L-alpha-aminoacyl-tRNA + H2O = an N-acyl-L-amino acid + a tRNA + H(+). Its function is as follows. Hydrolyzes ribosome-free peptidyl-tRNAs (with 1 or more amino acids incorporated), which drop off the ribosome during protein synthesis, or as a result of ribosome stalling. Catalyzes the release of premature peptidyl moieties from peptidyl-tRNA molecules trapped in stalled 50S ribosomal subunits, and thus maintains levels of free tRNAs and 50S ribosomes. This Teredinibacter turnerae (strain ATCC 39867 / T7901) protein is Peptidyl-tRNA hydrolase.